A 247-amino-acid chain; its full sequence is uncharacterized protein (247 aa).

This is an uncharacterized protein from Saccharomyces cerevisiae (strain ATCC 204508 / S288c) (Baker's yeast).